The sequence spans 206 residues: Ras-related protein Rab-7a (206 aa).

15–22 (GDSGVGKT) contributes to the GTP binding site. Residues Ser-17 and Ser-23 each carry the phosphoserine modification. Residues Thr-34, Thr-40, and Thr-64 each carry the phosphothreonine modification. Residues 34–40 (TQQYRAT) and 63–67 (DTAGQ) contribute to the GTP site. The Effector region signature appears at 37 to 45 (YRATVGADF). Residue Ser-72 is modified to Phosphoserine. Tyr-78 and Tyr-88 each carry phosphotyrosine. GTP-binding positions include 125-128 (NKLD) and 157-158 (AK). S-geranylgeranyl cysteine attachment occurs at residues Cys-205 and Cys-206.

The protein belongs to the small GTPase superfamily. Rab family.

It is found in the cytoplasmic vesicle. Its subcellular location is the phagosome membrane. It localises to the late endosome membrane. The protein localises to the lysosome membrane. The protein resides in the autophagosome membrane. It is found in the lipid droplet. The catalysed reaction is GTP + H2O = GDP + phosphate + H(+). Functionally, small GTPase which cycles between active GTP-bound and inactive GDP-bound states. In its active state, binds to a variety of effector proteins playing a key role in the regulation of endo-lysosomal trafficking. Governs early-to-late endosomal maturation, microtubule minus-end as well as plus-end directed endosomal migration and positioning, and endosome-lysosome transport through different protein-protein interaction cascades. Involved in lipophagy, a cytosolic lipase-independent autophagic pathway. Plays a role in phagocyte formation and acidification. The chain is Ras-related protein Rab-7a from Paramecium octaurelia.